The primary structure comprises 1537 residues: DNA excision repair protein ERCC-6-like 2 (1537 aa).

One can recognise a Helicase ATP-binding domain in the interval Tyr134 to Gly319. Asp147–Thr154 lines the ATP pocket. The DEAH box signature appears at Asp270–His273. The Helicase C-terminal domain occupies Val510–Lys660. Disordered regions lie at residues Lys715–Thr735 and Ser749–Thr768. Positions Gly755–Asp764 are enriched in basic and acidic residues. Positions Pro772–Ser783 match the Atypical PIP-box motif. Disordered regions lie at residues Lys791–Pro811, Ser833–Asp891, and Glu918–Leu948. Residues Glu834–Leu857 show a composition bias toward basic and acidic residues. Residues Ser968 and Ser971 each carry the phosphoserine modification. Residues Val1274–Asp1306 are disordered. Over residues Lys1276–Leu1292 the composition is skewed to basic and acidic residues. Over residues Asn1295–Asp1306 the composition is skewed to polar residues.

This sequence belongs to the SNF2/RAD54 helicase family. Interacts with NEK6. Interacts (via an atypical PIP-box) with PCNA; this interaction facilitates cenrtomeric localization of ERCC6L2. Interacts with CYREN; this interaction is DNA independent. Interacts with XRCC6 and XRCC5. In terms of processing, phosphorylated by NEK6.

The protein localises to the nucleus. Its subcellular location is the cytoplasm. The protein resides in the cytoskeleton. It is found in the microtubule organizing center. It localises to the centrosome. The protein localises to the mitochondrion. Its subcellular location is the chromosome. The protein resides in the centromere. Functionally, promotes double-strand break (DSB) end-joining and facilitates programmed recombination by controlling how DNA ends are joined in a spatially oriented manner during repair. Also plays a role in DNA repair by restricting DNA end resection in double strand break (DSB) repair. Facilitates replication of complex DNA regions and regulates the maintenance of chromatin structure. This Mus musculus (Mouse) protein is DNA excision repair protein ERCC-6-like 2.